The following is a 215-amino-acid chain: Fanconi anemia core complex-associated protein 24 (215 aa).

The tract at residues 160–215 is ruvA domain 2-like; it reads LRTVQQIPGVGKVKAPLLLQKFPSIQQLSNASIGELEQVVGQAVAQQIHAFFTQPR.

As to quaternary structure, belongs to the multisubunit FA complex composed of FANCA, FANCB, FANCC, FANCE, FANCF, FANCG, FANCL/PHF9, FANCM and FAAP24. Interacts with FANCM.

Its subcellular location is the nucleus. Functionally, plays a role in DNA repair through recruitment of the FA core complex to damaged DNA. Regulates FANCD2 monoubiquitination upon DNA damage. Induces chromosomal instability as well as hypersensitivity to DNA cross-linking agents, when repressed. Targets FANCM/FAAP24 complex to the DNA, preferentially to single strand DNA. The polypeptide is Fanconi anemia core complex-associated protein 24 (Homo sapiens (Human)).